A 739-amino-acid polypeptide reads, in one-letter code: AN1-type zinc finger protein 4 (739 aa).

The 76-residue stretch at 54–129 (MELFIETLTG…LKLVLAMRGG (76 aa)) folds into the Ubiquitin-like domain. The segment covering 246-255 (KPKKVVKVKP) has biased composition (basic residues). Disordered regions lie at residues 246-270 (KPKK…STAA) and 287-316 (LPSG…RPVS). An AN1-type zinc finger spans residues 673–720 (KKIMKHCFLCGKKTGLATSFECRCGNNFCASHRYAEAHGCTYDYKSAG). Cys-679, Cys-682, Cys-694, Cys-696, Cys-701, His-704, His-710, and Cys-712 together coordinate Zn(2+).

The polypeptide is AN1-type zinc finger protein 4 (Zfand4) (Mus musculus (Mouse)).